The following is a 776-amino-acid chain: Cilium assembly protein DZIP1L (776 aa).

Residues 166–189 (HTCHLCDKTFMNATFLRGHIQRRH) form a C2H2-type zinc finger. A coiled-coil region spans residues 196–450 (GKQKQEQQLG…RKVLAALRNN (255 aa)). A phosphoserine mark is found at serine 425 and serine 426. The disordered stretch occupies residues 520–776 (SRAKKRWEGT…SGSRPRIPGW (257 aa)). Residues 600–618 (GPSSTPVSPGPGLSTPPFS) are compositionally biased toward low complexity. The segment covering 652 to 683 (WSDSETSEESAQSPGKGSDGLASSATLVQSMV) has biased composition (polar residues). The span at 685 to 694 (NLEKQLETPA) shows a compositional bias: basic and acidic residues. Over residues 709-721 (TALQRSSTPARKT) the composition is skewed to polar residues.

It belongs to the DZIP C2H2-type zinc-finger protein family. As to quaternary structure, interacts with SEPTIN2.

Its subcellular location is the cytoplasm. The protein resides in the cytoskeleton. It localises to the cilium basal body. It is found in the microtubule organizing center. The protein localises to the centrosome. Its subcellular location is the centriole. Functionally, involved in primary cilium formation. Probably acts as a transition zone protein required for localization of PKD1/PC1 and PKD2/PC2 to the ciliary membrane. This Rattus norvegicus (Rat) protein is Cilium assembly protein DZIP1L.